A 495-amino-acid chain; its full sequence is Aspartyl/glutamyl-tRNA(Asn/Gln) amidotransferase subunit B (495 aa).

This sequence belongs to the GatB/GatE family. GatB subfamily. Heterotrimer of A, B and C subunits.

It carries out the reaction L-glutamyl-tRNA(Gln) + L-glutamine + ATP + H2O = L-glutaminyl-tRNA(Gln) + L-glutamate + ADP + phosphate + H(+). The catalysed reaction is L-aspartyl-tRNA(Asn) + L-glutamine + ATP + H2O = L-asparaginyl-tRNA(Asn) + L-glutamate + ADP + phosphate + 2 H(+). Allows the formation of correctly charged Asn-tRNA(Asn) or Gln-tRNA(Gln) through the transamidation of misacylated Asp-tRNA(Asn) or Glu-tRNA(Gln) in organisms which lack either or both of asparaginyl-tRNA or glutaminyl-tRNA synthetases. The reaction takes place in the presence of glutamine and ATP through an activated phospho-Asp-tRNA(Asn) or phospho-Glu-tRNA(Gln). The chain is Aspartyl/glutamyl-tRNA(Asn/Gln) amidotransferase subunit B from Beijerinckia indica subsp. indica (strain ATCC 9039 / DSM 1715 / NCIMB 8712).